Here is an 807-residue protein sequence, read N- to C-terminus: Spondin-1 (807 aa).

The N-terminal stretch at 1–28 is a signal peptide; sequence MRLSPAPLKLSRTPALLALALPLAAALA. One can recognise a Reelin domain in the interval 29–194; sequence FSDETLDKVP…DSTFDGVTDK (166 aa). Cystine bridges form between Cys-44-Cys-128, Cys-156-Cys-182, Cys-199-Cys-336, Cys-200-Cys-340, Cys-202-Cys-415, Cys-443-Cys-480, Cys-454-Cys-489, Cys-459-Cys-494, Cys-502-Cys-538, Cys-513-Cys-517, Cys-548-Cys-554, Cys-559-Cys-595, Cys-570-Cys-574, Cys-605-Cys-610, Cys-615-Cys-650, Cys-626-Cys-630, and Cys-660-Cys-665. The Spondin domain occupies 195–388; that stretch reads PILDCCACGT…LTSLDHPQSP (194 aa). N-linked (GlcNAc...) asparagine glycosylation occurs at Asn-214. 3 residues coordinate Ca(2+): Asp-325, Asp-354, and Asp-358. 6 TSP type-1 domains span residues 442 to 495, 501 to 555, 558 to 611, 614 to 666, 668 to 721, and 754 to 806; these read TCIY…PGCS, TCTM…EECS, SCLM…PECH, PCLL…PECP, DCEL…RKCL, and GCRM…NVHP. Residue Trp-448 is glycosylated (C-linked (Man) tryptophan). A glycan (C-linked (Man) tryptophan; partial) is linked at Trp-451. Residue Trp-507 is glycosylated (C-linked (Man) tryptophan). A C-linked (Man) tryptophan; partial glycan is attached at Trp-510. A glycan (C-linked (Man) tryptophan) is linked at Trp-564. The C-linked (Man) tryptophan; partial glycan is linked to Trp-620. C-linked (Man) tryptophan glycosylation occurs at Trp-623. Trp-674 is a glycosylation site (C-linked (Man) tryptophan). Asn-681 carries N-linked (GlcNAc...) asparagine glycosylation.

Binds to the central extracellular domain of APP and inhibits beta-secretase cleavage of APP. In terms of tissue distribution, highest expression in lung, lower expression in brain, heart, kidney, liver and testis, and lowest expression in pancreas, skeletal muscle and ovary. Not expressed in spleen.

The protein localises to the secreted. It localises to the extracellular space. Its subcellular location is the extracellular matrix. In terms of biological role, cell adhesion protein that promotes the attachment of spinal cord and sensory neuron cells and the outgrowth of neurites in vitro. May contribute to the growth and guidance of axons in both the spinal cord and the PNS. Major factor for vascular smooth muscle cell. The polypeptide is Spondin-1 (SPON1) (Homo sapiens (Human)).